The following is a 256-amino-acid chain: Ribonuclease HII (256 aa).

Positions 72–256 constitute an RNase H type-2 domain; sequence ALICGIDEVG…TFEPIKSLVN (185 aa). Residues Asp78, Glu79, and Asp170 each coordinate a divalent metal cation.

This sequence belongs to the RNase HII family. Mn(2+) serves as cofactor. Mg(2+) is required as a cofactor.

The protein localises to the cytoplasm. The enzyme catalyses Endonucleolytic cleavage to 5'-phosphomonoester.. Endonuclease that specifically degrades the RNA of RNA-DNA hybrids. The sequence is that of Ribonuclease HII from Staphylococcus saprophyticus subsp. saprophyticus (strain ATCC 15305 / DSM 20229 / NCIMB 8711 / NCTC 7292 / S-41).